The chain runs to 366 residues: Chalcone synthase B (366 aa).

Cys172 is a catalytic residue.

The protein belongs to the thiolase-like superfamily. Chalcone/stilbene synthases family.

The catalysed reaction is (E)-4-coumaroyl-CoA + 3 malonyl-CoA + 3 H(+) = 2',4,4',6'-tetrahydroxychalcone + 3 CO2 + 4 CoA. It participates in secondary metabolite biosynthesis; flavonoid biosynthesis. Functionally, the primary product of this enzyme is 4,2',4',6'-tetrahydroxychalcone (also termed naringenin-chalcone or chalcone) which can under specific conditions spontaneously isomerize into naringenin. This is Chalcone synthase B (CHSB) from Ipomoea trifida (Morning glory).